The following is a 500-amino-acid chain: Probable glycine dehydrogenase (decarboxylating) subunit 2 (500 aa).

Positions 1 to 25 (MLIFEHSRPGRRNYSQSPKAAEATD) are disordered. K263 carries the post-translational modification N6-(pyridoxal phosphate)lysine.

This sequence belongs to the GcvP family. C-terminal subunit subfamily. As to quaternary structure, the glycine cleavage system is composed of four proteins: P, T, L and H. In this organism, the P 'protein' is a heterodimer of two subunits. Requires pyridoxal 5'-phosphate as cofactor.

The enzyme catalyses N(6)-[(R)-lipoyl]-L-lysyl-[glycine-cleavage complex H protein] + glycine + H(+) = N(6)-[(R)-S(8)-aminomethyldihydrolipoyl]-L-lysyl-[glycine-cleavage complex H protein] + CO2. Functionally, the glycine cleavage system catalyzes the degradation of glycine. The P protein binds the alpha-amino group of glycine through its pyridoxal phosphate cofactor; CO(2) is released and the remaining methylamine moiety is then transferred to the lipoamide cofactor of the H protein. In Nitrosospira multiformis (strain ATCC 25196 / NCIMB 11849 / C 71), this protein is Probable glycine dehydrogenase (decarboxylating) subunit 2.